We begin with the raw amino-acid sequence, 158 residues long: Pyruvoyl-dependent arginine decarboxylase (158 aa).

Position 44 is a pyruvic acid (Ser) (S44).

Belongs to the PdaD family. The cofactor is pyruvate.

It catalyses the reaction L-arginine + H(+) = agmatine + CO2. In Pyrococcus abyssi (strain GE5 / Orsay), this protein is Pyruvoyl-dependent arginine decarboxylase.